The primary structure comprises 375 residues: Beta sliding clamp (375 aa).

It belongs to the beta sliding clamp family. Forms a ring-shaped head-to-tail homodimer around DNA which binds and tethers DNA polymerases and other proteins to the DNA. The DNA replisome complex has a single clamp-loading complex (3 tau and 1 each of delta, delta', psi and chi subunits) which binds 3 Pol III cores (1 core on the leading strand and 2 on the lagging strand) each with a beta sliding clamp dimer. Additional proteins in the replisome are other copies of gamma, psi and chi, Ssb, DNA helicase and RNA primase.

It is found in the cytoplasm. Its function is as follows. Confers DNA tethering and processivity to DNA polymerases and other proteins. Acts as a clamp, forming a ring around DNA (a reaction catalyzed by the clamp-loading complex) which diffuses in an ATP-independent manner freely and bidirectionally along dsDNA. Initially characterized for its ability to contact the catalytic subunit of DNA polymerase III (Pol III), a complex, multichain enzyme responsible for most of the replicative synthesis in bacteria; Pol III exhibits 3'-5' exonuclease proofreading activity. The beta chain is required for initiation of replication as well as for processivity of DNA replication. The polypeptide is Beta sliding clamp (dnaN) (Mycoplasma capricolum subsp. capricolum (strain California kid / ATCC 27343 / NCTC 10154)).